The chain runs to 1361 residues: DNA-directed RNA polymerase subunit beta'' (1361 aa).

Zn(2+) is bound by residues Cys224, Cys295, Cys302, and Cys305.

It belongs to the RNA polymerase beta' chain family. RpoC2 subfamily. As to quaternary structure, in plastids the minimal PEP RNA polymerase catalytic core is composed of four subunits: alpha, beta, beta', and beta''. When a (nuclear-encoded) sigma factor is associated with the core the holoenzyme is formed, which can initiate transcription. Requires Zn(2+) as cofactor.

It is found in the plastid. Its subcellular location is the chloroplast. The catalysed reaction is RNA(n) + a ribonucleoside 5'-triphosphate = RNA(n+1) + diphosphate. Functionally, DNA-dependent RNA polymerase catalyzes the transcription of DNA into RNA using the four ribonucleoside triphosphates as substrates. The protein is DNA-directed RNA polymerase subunit beta'' of Spinacia oleracea (Spinach).